The chain runs to 182 residues: Ribosome maturation factor RimM (182 aa).

In terms of domain architecture, PRC barrel spans 103–182 (EDEFYWRELF…RIEVDWDPGF (80 aa)).

Belongs to the RimM family. In terms of assembly, binds ribosomal protein uS19.

It is found in the cytoplasm. In terms of biological role, an accessory protein needed during the final step in the assembly of 30S ribosomal subunit, possibly for assembly of the head region. Essential for efficient processing of 16S rRNA. May be needed both before and after RbfA during the maturation of 16S rRNA. It has affinity for free ribosomal 30S subunits but not for 70S ribosomes. This Vibrio vulnificus (strain CMCP6) protein is Ribosome maturation factor RimM.